We begin with the raw amino-acid sequence, 531 residues long: Peptide chain release factor 3 (531 aa).

Residues Ala-13–Lys-282 form the tr-type G domain. GTP is bound by residues Ser-22 to Thr-29, Asp-90 to His-94, and Asn-144 to Asp-147.

This sequence belongs to the TRAFAC class translation factor GTPase superfamily. Classic translation factor GTPase family. PrfC subfamily.

Its subcellular location is the cytoplasm. Increases the formation of ribosomal termination complexes and stimulates activities of RF-1 and RF-2. It binds guanine nucleotides and has strong preference for UGA stop codons. It may interact directly with the ribosome. The stimulation of RF-1 and RF-2 is significantly reduced by GTP and GDP, but not by GMP. The chain is Peptide chain release factor 3 from Psychrobacter sp. (strain PRwf-1).